We begin with the raw amino-acid sequence, 475 residues long: Trifunctional enzyme subunit beta, mitochondrial (475 aa).

The transit peptide at 1–34 (MTTILTSTFRNLSTTSKWALRFSVRPLSCSSQVQ) directs the protein to the mitochondrion. Lys53 is modified (N6-succinyllysine). Residue Lys73 is modified to N6-acetyllysine; alternate. Lys73 is modified (N6-succinyllysine; alternate). The Acyl-thioester intermediate role is filled by Cys139. Residues 174–221 (IRHSRNMRKMMLDLNKAKTLAQRLSLLTKFRLNFLSPELPAVAEFSTN) lie within the membrane without spanning it. At Lys189 the chain carries N6-acetyllysine; alternate. Lys189 bears the N6-succinyllysine; alternate mark. An N6-succinyllysine mark is found at Lys191, Lys273, and Lys292. Lys294 carries the N6-acetyllysine; alternate modification. Lys294 carries the post-translational modification N6-succinyllysine; alternate. Position 299 is an N6-acetyllysine (Lys299). Lys333 bears the N6-acetyllysine; alternate mark. Lys333 carries the N6-succinyllysine; alternate modification. N6-acetyllysine is present on residues Lys349 and Lys362. The Proton donor/acceptor role is filled by Cys459.

Belongs to the thiolase-like superfamily. Thiolase family. In terms of assembly, heterotetramer of 2 alpha/HADHA and 2 beta/HADHB subunits; forms the mitochondrial trifunctional enzyme. Also purified as higher order heterooligomers including a 4 alpha/HADHA and 4 beta/HADHB heterooligomer which physiological significance remains unclear. The mitochondrial trifunctional enzyme interacts with MTLN. Interacts with RSAD2/viperin.

The protein localises to the mitochondrion. Its subcellular location is the mitochondrion inner membrane. The protein resides in the mitochondrion outer membrane. It localises to the endoplasmic reticulum. It catalyses the reaction an acyl-CoA + acetyl-CoA = a 3-oxoacyl-CoA + CoA. It carries out the reaction butanoyl-CoA + acetyl-CoA = 3-oxohexanoyl-CoA + CoA. The enzyme catalyses hexanoyl-CoA + acetyl-CoA = 3-oxooctanoyl-CoA + CoA. The catalysed reaction is octanoyl-CoA + acetyl-CoA = 3-oxodecanoyl-CoA + CoA. It catalyses the reaction decanoyl-CoA + acetyl-CoA = 3-oxododecanoyl-CoA + CoA. It carries out the reaction dodecanoyl-CoA + acetyl-CoA = 3-oxotetradecanoyl-CoA + CoA. The enzyme catalyses tetradecanoyl-CoA + acetyl-CoA = 3-oxohexadecanoyl-CoA + CoA. The protein operates within lipid metabolism; fatty acid beta-oxidation. Mitochondrial trifunctional enzyme catalyzes the last three of the four reactions of the mitochondrial beta-oxidation pathway. The mitochondrial beta-oxidation pathway is the major energy-producing process in tissues and is performed through four consecutive reactions breaking down fatty acids into acetyl-CoA. Among the enzymes involved in this pathway, the trifunctional enzyme exhibits specificity for long-chain fatty acids. Mitochondrial trifunctional enzyme is a heterotetrameric complex composed of two proteins, the trifunctional enzyme subunit alpha/HADHA carries the 2,3-enoyl-CoA hydratase and the 3-hydroxyacyl-CoA dehydrogenase activities, while the trifunctional enzyme subunit beta/HADHB described here bears the 3-ketoacyl-CoA thiolase activity. The sequence is that of Trifunctional enzyme subunit beta, mitochondrial (Hadhb) from Rattus norvegicus (Rat).